Consider the following 449-residue polypeptide: Transcription factor AP-2 gamma (449 aa).

K10 is covalently cross-linked (Glycyl lysine isopeptide (Lys-Gly) (interchain with G-Cter in SUMO)). Positions 13–58 (EDCEDRHDSSSNGNPRIPHLSSPGQHLYSPAPPLSHTGVAEYQPPP) are disordered. The PPxY motif signature appears at 59–64 (YFPPPY). The disordered stretch occupies residues 94-130 (AATGSQQQAWPGRQSQEGSSLASHHSRSASLIPHISG). The segment covering 95-111 (ATGSQQQAWPGRQSQEG) has biased composition (polar residues). Residues 112-124 (SSLASHHSRSASL) are compositionally biased toward low complexity. The residue at position 251 (S251) is a Phosphoserine; by PKA. The interval 292–423 (RRKAAHVTLL…YIKEALIAID (132 aa)) is H-S-H (helix-span-helix), dimerization. The interval 426–449 (YMNPGDQSPADSSKTMEKMEKHRK) is disordered. S433 carries the phosphoserine modification. Basic and acidic residues predominate over residues 439 to 449 (KTMEKMEKHRK).

It belongs to the AP-2 family. Binds DNA as a dimer. Can form homodimers or heterodimers with other AP-2 family members. Interacts with WWOX. Interacts with UBE2I. Interacts with KCTD1; this interaction represses transcription activation. Interacts with CITED2 (via C-terminus); the interaction stimulates TFAP2B-transcriptional activity. Interacts with CITED4. Interacts with MTA1. In terms of processing, sumoylated on Lys-10; which inhibits transcriptional activity. As to expression, expressed in lung, ovary and testis. Expressed in most squamous epithelia. Also, detected in several exocrine glands including the prostate, the preputial and salivary glands, serous glands of the tongue and ocular harderian glands.

Its subcellular location is the nucleus. Sequence-specific DNA-binding transcription factor that interacts with cellular enhancer elements to regulate transcription of selected genes, and which plays a key role in early embryonic development. AP-2 factors bind to the consensus sequence 5'-GCCNNNGGC-3' and activate genes involved in a large spectrum of important biological functions. TFAP2C plays a key role in early embryonic development by regulating both inner cell mass (ICM) and trophectoderm differentiation. At the 8-cell stage, during morula development, controls expression of cell-polarity genes. Upon trophoblast commitment, binds to late trophectoderm genes in blastocysts together with CDX2, and later to extra-embryonic ectoderm genes together with SOX2. Binds to both closed and open chromatin with other transcription factors. The sequence is that of Transcription factor AP-2 gamma from Mus musculus (Mouse).